The primary structure comprises 129 residues: MSIPADLKYTQSHEWVRAEADGSVTVGITHHAQDLLGDMVFIENPAVGRTLAKGEECAVVESVKAASDVYAPVAGEVIAANGEVESSPESVNQDAYTAWLFKIKPANPADVDALLDAAAYQKVVESEAH.

The 82-residue stretch at 23–104 (SVTVGITHHA…AYTAWLFKIK (82 aa)) folds into the Lipoyl-binding domain. Residue K64 is modified to N6-lipoyllysine.

The protein belongs to the GcvH family. The glycine cleavage system is composed of four proteins: P, T, L and H. The cofactor is (R)-lipoate.

The glycine cleavage system catalyzes the degradation of glycine. The H protein shuttles the methylamine group of glycine from the P protein to the T protein. The chain is Glycine cleavage system H protein from Thiobacillus denitrificans (strain ATCC 25259 / T1).